Here is a 340-residue protein sequence, read N- to C-terminus: Protein-tyrosine-phosphatase PTP1 (340 aa).

Positions 58–326 (IAHEFTGLQA…FFCYNAIVDE (269 aa)) constitute a Tyrosine-protein phosphatase domain. Residues aspartate 234, 265-271 (CSAGIGR), and glutamine 311 contribute to the substrate site. The Phosphocysteine intermediate role is filled by cysteine 265.

As to quaternary structure, interacts with MPK6. Interacts with KIN10. In terms of processing, phosphorylated by KIN10. In terms of tissue distribution, expressed in roots, stems and flowers, and at low levels in leaves.

The protein resides in the cytoplasm. Its subcellular location is the cytosol. It localises to the nucleus. It catalyses the reaction O-phospho-L-tyrosyl-[protein] + H2O = L-tyrosyl-[protein] + phosphate. Inhibited by hydrogen peroxide. Its function is as follows. Protein-tyrosine-phosphatase that dephosphorylates and probably inhibits MPK6 in non-oxidative stress conditions. In association with MKP1, represses salicylic acid (SA) and camalexin biosynthesis, thus modulating defense response. May also repress MPK3. Dephosphorylates and inactivates MPK4 in vitro. This is Protein-tyrosine-phosphatase PTP1 (PTP1) from Arabidopsis thaliana (Mouse-ear cress).